Here is an 811-residue protein sequence, read N- to C-terminus: Protein kinase C-binding protein NELL2a (811 aa).

The first 18 residues, 1 to 18 (MAFLQLFVGLLCGAAVSA), serve as a signal peptide directing secretion. Positions 54–225 (AFMFQGSSRS…TQCPDLNRTC (172 aa)) constitute a Laminin G-like domain. N-linked (GlcNAc...) asparagine glycans are attached at residues N222, N290, and N295. The VWFC 1 domain maps to 269–328 (RTCRVKDQIYREEQSWTDGCKNCTCSNGTVRCEKILCPPLDCPDGTTPAYVTGTCCKECQ). One can recognise an EGF-like 1 domain in the interval 395–437 (GHDFCAEENICSENSDCVNLDAGASCGCKNGFRPLRLDSAYCE). Intrachain disulfides connect C399/C411, C405/C420, and C422/C436. 3 residues coordinate Ca(2+): D438, I439, and E441. Residues 438-479 (DIDECAEGRHYCRENTECVNTAGSFMCVCHTGFIRIDDYSCT) enclose the EGF-like 2; calcium-binding domain. 9 disulfide bridges follow: C442–C455, C449–C464, C466–C478, C484–C497, C491–C506, C508–C519, C523–C533, C527–C539, and C541–C550. N457, T458, and S461 together coordinate Ca(2+). In terms of domain architecture, EGF-like 3; calcium-binding spans 480–520 (EHDECASGQHDCDENALCFNTVGGHSCSCKPGYSGNGTVCR). N-linked (GlcNAc...) asparagine glycosylation occurs at N515. The 31-residue stretch at 521 to 551 (ALCDGRCLNGGSCASPNVCVCVQGFSGQNCE) folds into the EGF-like 4 domain. Ca(2+)-binding residues include D553, I554, and E556. In terms of domain architecture, EGF-like 5; calcium-binding spans 553–592 (DIDECSEGLVQCAAHATCVNLPGWYHCECRDGYHDNEVFS). 3 disulfide bridges follow: C557-C570, C564-C579, and C581-C598. Ca(2+) contacts are provided by N572, L573, and W576. Ca(2+)-binding residues include D600, I601, and E603. The EGF-like 6; calcium-binding domain maps to 600 to 635 (DIDECRTGRSTCANDTVCFNLDGGFDCRCPHGHNCS). Disulfide bonds link C604–C617, C611–C626, and C628–C634. An N-linked (GlcNAc...) asparagine glycan is attached at N613. Ca(2+) is bound by residues N619, L620, and G623. An N-linked (GlcNAc...) asparagine glycan is attached at N633. VWFC domains are found at residues 636 to 691 (GDCI…PECD) and 696 to 754 (SQCL…PRCV).

As to quaternary structure, homotrimer.

It localises to the secreted. May regulate neuronal differentiation, polarization and axon guidance. This is Protein kinase C-binding protein NELL2a (nell2a) from Danio rerio (Zebrafish).